The primary structure comprises 340 residues: Mitochondrial carrier protein CoAc1 (340 aa).

The next 6 membrane-spanning stretches (helical) occupy residues 22 to 42, 85 to 105, 130 to 147, 199 to 219, 237 to 257, and 297 to 317; these read ALDLLPVYAKELIAGGAAGAF, FYKGNGASVLRIVPYAALHYM, LLAGSAAGGTAVLCTYPL, GVGPTLIGILPYAGLKFYIYE, LSCGALAGLFGQTLTYPLDVV, and FAGLSLNYVKVVPSVAIGFTT. 3 Solcar repeats span residues 27–113, 124–224, and 231–324; these read PVYA…YRCW, TGPV…LKSQ, and DSVI…MKAL.

The protein belongs to the mitochondrial carrier (TC 2.A.29) family. In terms of tissue distribution, expressed throughout the plant.

The protein localises to the mitochondrion inner membrane. Required for the accumulation of coenzyme A in the mitochondrial matrix. The polypeptide is Mitochondrial carrier protein CoAc1 (Zea mays (Maize)).